Here is a 159-residue protein sequence, read N- to C-terminus: NADH-quinone oxidoreductase subunit I (159 aa).

4Fe-4S ferredoxin-type domains follow at residues 51 to 80 and 90 to 119; these read RRYE…IESD and TRYD…EGPN. Cysteine 60, cysteine 63, cysteine 66, cysteine 70, cysteine 99, cysteine 102, cysteine 105, and cysteine 109 together coordinate [4Fe-4S] cluster.

This sequence belongs to the complex I 23 kDa subunit family. As to quaternary structure, NDH-1 is composed of 14 different subunits. Subunits NuoA, H, J, K, L, M, N constitute the membrane sector of the complex. It depends on [4Fe-4S] cluster as a cofactor.

The protein localises to the cell inner membrane. The catalysed reaction is a quinone + NADH + 5 H(+)(in) = a quinol + NAD(+) + 4 H(+)(out). In terms of biological role, NDH-1 shuttles electrons from NADH, via FMN and iron-sulfur (Fe-S) centers, to quinones in the respiratory chain. The immediate electron acceptor for the enzyme in this species is believed to be ubiquinone. Couples the redox reaction to proton translocation (for every two electrons transferred, four hydrogen ions are translocated across the cytoplasmic membrane), and thus conserves the redox energy in a proton gradient. In Rickettsia prowazekii (strain Madrid E), this protein is NADH-quinone oxidoreductase subunit I.